We begin with the raw amino-acid sequence, 214 residues long: Transmembrane emp24 domain-containing protein p24delta9 (214 aa).

The first 24 residues, 1 to 24, serve as a signal peptide directing secretion; the sequence is MFLRSLNLCTILLFLAISSQVSQS. At 25 to 181 the chain is on the lumenal side; it reads LHFELQSGRT…QNLNRATNSK (157 aa). Residues 34–149 enclose the GOLD domain; the sequence is TKCISEDIKS…VEVMEFDVKR (116 aa). A coiled-coil region spans residues 164–177; it reads LREREEEMQNLNRA. At Arg-167 the chain carries Omega-N-methylated arginine. The helical transmembrane segment at 182–202 threads the bilayer; the sequence is MAWLSFLSLFVCLGVAGMQFV. The Cytoplasmic portion of the chain corresponds to 203 to 214; that stretch reads HLKTFFEKKKVI. The short motif at 207–208 is the COPII vesicle coat-binding element; it reads FF. The short motif at 207 to 214 is the COPI vesicle coat-binding element; it reads FFEKKKVI.

Belongs to the EMP24/GP25L family. As to quaternary structure, probably oligomerizes with other members of the EMP24/GP25L family. Associates with the COPI vesicle coat (coatomer). Associates with the COPII vesicle coat (coatomer).

The protein resides in the endoplasmic reticulum membrane. Its subcellular location is the golgi apparatus. The protein localises to the cis-Golgi network membrane. It localises to the golgi stack membrane. In terms of biological role, involved in vesicular protein trafficking. Mainly functions in the early secretory pathway. Thought to act as cargo receptor at the lumenal side for incorporation of secretory cargo molecules into transport vesicles and to be involved in vesicle coat formation at the cytoplasmic side. In Arabidopsis thaliana (Mouse-ear cress), this protein is Transmembrane emp24 domain-containing protein p24delta9.